A 123-amino-acid chain; its full sequence is MPDASLGSLGITWCFLESPLEVSSGRFGLARLLGSQDHGDDPAERGRTATDAWGPSRWGQSPGNGGGYCDASPPSALAPGDRAWALPASPSSGAPASQHCCLEKAGTRTKASPVWGRDGNTWN.

The tract at residues 35–100 is disordered; the sequence is SQDHGDDPAE…SSGAPASQHC (66 aa). The span at 37–48 shows a compositional bias: basic and acidic residues; the sequence is DHGDDPAERGRT. Residues 85–97 are compositionally biased toward low complexity; that stretch reads ALPASPSSGAPAS.

This is an uncharacterized protein from Homo sapiens (Human).